The following is a 493-amino-acid chain: Signal recognition particle subunit SRP54 3 (493 aa).

Positions 1 to 294 (MVLADVGGSI…NVEPFVARLL (294 aa)) are G-domain. GTP-binding positions include 107–114 (GLQGSGKT), 189–193 (DTSGR), and 247–250 (TKLD). The tract at residues 295–493 (GRGDLPGLID…KMLAGMRGGA (199 aa)) is M-domain.

It belongs to the GTP-binding SRP family. SRP54 subfamily. In terms of assembly, component of a signal recognition particle (SRP) complex that consists of a 7SL RNA molecule of 300 nucleotides and six protein subunits: SRP72, SRP68, SRP54, SRP19, SRP14 and SRP9.

The protein resides in the cytoplasm. The protein localises to the endoplasmic reticulum. It carries out the reaction GTP + H2O = GDP + phosphate + H(+). In terms of biological role, component of the signal recognition particle (SRP) complex, a ribonucleoprotein complex that mediates the cotranslational targeting of secretory and membrane proteins to the endoplasmic reticulum (ER). As part of the SRP complex, associates with the SRP receptor (SR) component SRPRA to target secretory proteins to the endoplasmic reticulum membrane. Binds to the signal sequence of presecretory proteins when they emerge from the ribosomes. Displays basal GTPase activity, and stimulates reciprocal GTPase activation of the SR subunit SRPRA. Forms a guanosine 5'-triphosphate (GTP)-dependent complex with the SR subunit SRPRA. SR compaction and GTPase mediated rearrangement of SR drive SRP-mediated cotranslational protein translocation into the ER. Requires the presence of SRP9/SRP14 and/or SRP19 to stably interact with RNA. The sequence is that of Signal recognition particle subunit SRP54 3 (SRP54-3) from Hordeum vulgare (Barley).